A 472-amino-acid polypeptide reads, in one-letter code: H(+)/Cl(-) exchange transporter ClcA (472 aa).

The Cytoplasmic portion of the chain corresponds to 1-32 (MKAETPSFEAHQFVRVRRGDAVRRLIQRDKTP). A helical transmembrane segment spans residues 33 to 69 (LAVLFMAAVVGTLAGLVGVAFEKSVNWVQNQRIGALA). Residues 70 to 76 (QVADHWY) lie on the Periplasmic side of the membrane. The helical transmembrane segment at 77 to 100 (LVWPLAFILSALLAMVGYFLVRRF) threads the bilayer. A Selectivity filter part_1 motif is present at residues 106 to 110 (GSGIP). Ser107 contributes to the chloride binding site. The segment at residues 109 to 116 (IPEIEGAL) is an intramembrane region (helical). Topologically, residues 117–123 (EELRPVR) are cytoplasmic. The next 2 membrane-spanning stretches (helical) occupy residues 124–141 (WWRV…TLGA) and 148–166 (EGPM…LDVF). Residues 146–150 (GREGP) carry the Selectivity filter part_2 motif. Residues 167 to 176 (RMRSPEARHT) lie on the Cytoplasmic side of the membrane. 2 intramembrane regions (helical) span residues 177 to 189 (LLAT…LSAA) and 193 to 201 (PLAGILFII). Over 202 to 214 (EEMRPQFRYNLIS) the chain is Cytoplasmic. The chain crosses the membrane as a helical span at residues 215 to 232 (IKAVFTGVIMSSIVFRIF). Residues 233 to 252 (NGEAAIIEVGKLSNAPVNTL) are Periplasmic-facing. A helical transmembrane segment spans residues 253–281 (WLYLVLGMLFGCFGPLFNFLVLRTQDLFQ). Residues 282-287 (RIHGGN) lie on the Cytoplasmic side of the membrane. Residues 288-309 (IKKWVLIGGLIGGLCGLLGLMQ) form a helical membrane-spanning segment. The Periplasmic segment spans residues 310–329 (PSAVGGGFNLIPIAAAGNFS). Helical transmembrane passes span 330–349 (VGLL…ICFS) and 355–376 (GIFA…MAAI). A Selectivity filter part_3 motif is present at residues 355–359 (GIFAP). Ile356 and Phe357 together coordinate chloride. Topologically, residues 377–386 (PLFPAYHLDA) are periplasmic. An intramembrane region (helical) is located at residues 387 to 401 (GTFAIAGMGALLAAS). Residues 402–404 (VRA) constitute an intramembrane region (note=Loop between two helices). The segment at residues 405–416 (PLTGIVLVLEMT) is an intramembrane region (helical). An intramembrane region (note=Loop between two helices) is located at residues 417–421 (DNYQL). The helical transmembrane segment at 422 to 438 (ILPMIITCLGATLLAQF) threads the bilayer. Residues 439 to 472 (LGGKPLYSTILQRTLAKQEAEQAAKAQQAPRENT) lie on the Cytoplasmic side of the membrane. Tyr445 provides a ligand contact to chloride.

It belongs to the chloride channel (TC 2.A.49) family. ClcA subfamily. In terms of assembly, homodimer.

It is found in the cell inner membrane. The catalysed reaction is 2 chloride(in) + H(+)(out) = 2 chloride(out) + H(+)(in). In terms of biological role, proton-coupled chloride transporter. Functions as antiport system and exchanges two chloride ions for 1 proton. Probably acts as an electrical shunt for an outwardly-directed proton pump that is linked to amino acid decarboxylation, as part of the extreme acid resistance (XAR) response. This chain is H(+)/Cl(-) exchange transporter ClcA, found in Klebsiella pneumoniae subsp. pneumoniae (strain ATCC 700721 / MGH 78578).